The sequence spans 896 residues: Alanine--tRNA ligase (896 aa).

Residues H599, H603, C707, and H711 each coordinate Zn(2+).

This sequence belongs to the class-II aminoacyl-tRNA synthetase family. Zn(2+) serves as cofactor.

It is found in the cytoplasm. It catalyses the reaction tRNA(Ala) + L-alanine + ATP = L-alanyl-tRNA(Ala) + AMP + diphosphate. Its function is as follows. Catalyzes the attachment of alanine to tRNA(Ala) in a two-step reaction: alanine is first activated by ATP to form Ala-AMP and then transferred to the acceptor end of tRNA(Ala). Also edits incorrectly charged Ser-tRNA(Ala) and Gly-tRNA(Ala) via its editing domain. This Pyrobaculum calidifontis (strain DSM 21063 / JCM 11548 / VA1) protein is Alanine--tRNA ligase.